A 685-amino-acid polypeptide reads, in one-letter code: Delta-like protein 4 (685 aa).

The N-terminal stretch at 1–26 (MAAASRSASGWALLLLVALWQQRAAG) is a signal peptide. The Extracellular portion of the chain corresponds to 27 to 529 (SGVFQLQLQE…PVGLPPSFPW (503 aa)). Intrachain disulfides connect C50–C54 and C61–C74. N-linked (GlcNAc...) asparagine glycans are attached at residues N108 and N183. A DSL domain is found at 173 to 217 (VICSDNYYGDNCSRLCKKRNDHFGHYVCQPDGNLSCLPGWTGEYC). A disulfide bridge links C175 with C184. Interaction with Notch1 stretches follow at residues 185–187 (SRL) and 191–195 (RNDHF). A disulfide bond links C188 and C200. N205 carries an N-linked (GlcNAc...) asparagine glycan. 25 cysteine pairs are disulfide-bonded: C208/C217, C222/C233, C226/C239, C241/C250, C253/C264, C259/C270, C272/C281, C288/C300, C294/C310, C312/C321, C328/C339, C333/C348, C350/C359, C366/C377, C371/C388, C390/C399, C406/C417, C411/C426, C428/C437, C444/C455, C449/C464, C466/C475, C484/C495, C489/C506, and C508/C517. EGF-like domains are found at residues 218 to 251 (QQPI…RLCN), 252 to 282 (ECIP…LFCD), 284 to 322 (DLNY…VDCE), 324 to 360 (ELSE…LHCE), 362 to 400 (STLS…SNCE), 402 to 438 (KVDR…TYCE), 440 to 476 (HVSD…RRCE), and 480 to 518 (SIDA…SRCE). Residue N393 is glycosylated (N-linked (GlcNAc...) asparagine). The helical transmembrane segment at 530–550 (VAVSLGVGLAVLLVLLGMVAV) threads the bilayer. Residues 551 to 685 (AVRQLRLRRP…RNECVIATEV (135 aa)) are Cytoplasmic-facing.

In terms of assembly, interacts with NOTCH4. Interacts (via N-terminal DSL and MNNL domains) with NOTCH1 (via EGF-like domains). In terms of tissue distribution, expressed in vascular endothelium.

The protein localises to the cell membrane. Functionally, involved in the Notch signaling pathway as Notch ligand. Activates NOTCH1 and NOTCH4. Involved in angiogenesis; negatively regulates endothelial cell proliferation and migration and angiogenic sprouting. Essential for retinal progenitor proliferation. Required for suppressing rod fates in late retinal progenitors as well as for proper generation of other retinal cell types. During spinal cord neurogenesis, inhibits V2a interneuron fate. This is Delta-like protein 4 (DLL4) from Homo sapiens (Human).